The sequence spans 138 residues: Small ribosomal subunit protein uS11c (138 aa).

This sequence belongs to the universal ribosomal protein uS11 family. As to quaternary structure, part of the 30S ribosomal subunit.

The protein localises to the plastid. In Cuscuta obtusiflora (Peruvian dodder), this protein is Small ribosomal subunit protein uS11c.